The sequence spans 222 residues: MNEELSAFFDVPVGTMMLAIAFPAILLPTPNRLITNRWITIQQWLIQLIMKQLLSIHNMKGLSWSLMLITLTLFIGLTNLLGLLPYSFAPTTQLTVNLSMAIPLWTGTVVLGFRYKTKISLAHLLPQGTPTFLIPMIIIIETISLLIRPITLAVRLTANITAGHLLIHLTGSAALTLLSVHLMTITVTFITVVMLTILELAVALIQAYVFALLISLYLHESA.

A run of 6 helical transmembrane segments spans residues 7–27 (AFFD…AILL), 64–84 (WSLM…LGLL), 93–113 (QLTV…VLGF), 132–152 (FLIP…PITL), 160–180 (ITAG…LLSV), and 197–219 (ILEL…LYLH).

Belongs to the ATPase A chain family. In terms of assembly, component of the ATP synthase complex composed at least of ATP5F1A/subunit alpha, ATP5F1B/subunit beta, ATP5MC1/subunit c (homooctomer), MT-ATP6/subunit a, MT-ATP8/subunit 8, ATP5ME/subunit e, ATP5MF/subunit f, ATP5MG/subunit g, ATP5MK/subunit k, ATP5MJ/subunit j, ATP5F1C/subunit gamma, ATP5F1D/subunit delta, ATP5F1E/subunit epsilon, ATP5PF/subunit F6, ATP5PB/subunit b, ATP5PD/subunit d, ATP5PO/subunit OSCP. ATP synthase complex consists of a soluble F(1) head domain (subunits alpha(3) and beta(3)) - the catalytic core - and a membrane F(0) domain - the membrane proton channel (subunits c, a, 8, e, f, g, k and j). These two domains are linked by a central stalk (subunits gamma, delta, and epsilon) rotating inside the F1 region and a stationary peripheral stalk (subunits F6, b, d, and OSCP). Interacts with DNAJC30; interaction is direct.

It is found in the mitochondrion inner membrane. It carries out the reaction H(+)(in) = H(+)(out). Subunit a, of the mitochondrial membrane ATP synthase complex (F(1)F(0) ATP synthase or Complex V) that produces ATP from ADP in the presence of a proton gradient across the membrane which is generated by electron transport complexes of the respiratory chain. ATP synthase complex consist of a soluble F(1) head domain - the catalytic core - and a membrane F(1) domain - the membrane proton channel. These two domains are linked by a central stalk rotating inside the F(1) region and a stationary peripheral stalk. During catalysis, ATP synthesis in the catalytic domain of F(1) is coupled via a rotary mechanism of the central stalk subunits to proton translocation. With the subunit c (ATP5MC1), forms the proton-conducting channel in the F(0) domain, that contains two crucial half-channels (inlet and outlet) that facilitate proton movement from the mitochondrial intermembrane space (IMS) into the matrix. Protons are taken up via the inlet half-channel and released through the outlet half-channel, following a Grotthuss mechanism. The polypeptide is ATP synthase F(0) complex subunit a (Elephas maximus (Indian elephant)).